The chain runs to 139 residues: Cellular retinoic acid-binding protein 2 (139 aa).

A Nuclear localization signal motif is present at residues 21-31 (KALGVNMMMRK). K103 participates in a covalent cross-link: Glycyl lysine isopeptide (Lys-Gly) (interchain with G-Cter in SUMO). 134–136 (RVY) provides a ligand contact to all-trans-retinoate.

Belongs to the calycin superfamily. Fatty-acid binding protein (FABP) family. In terms of assembly, interacts with importin alpha, RXR and RARA. In terms of processing, sumoylated in response to retinoic acid binding, sumoylation is critical for dissociation from ER and subsequent nuclear translocation.

The protein resides in the cytoplasm. It localises to the endoplasmic reticulum. It is found in the nucleus. In terms of biological role, transports retinoic acid to the nucleus. Regulates the access of retinoic acid to the nuclear retinoic acid receptors. This Rattus norvegicus (Rat) protein is Cellular retinoic acid-binding protein 2 (Crabp2).